A 653-amino-acid polypeptide reads, in one-letter code: Sulfate transporter 1.2 (653 aa).

A disordered region spans residues 1–30; the sequence is MSSRAHPVDGSPATDGGHVPMKPSPTRHKV. Residues 1-91 are Cytoplasmic-facing; that stretch reads MSSRAHPVDG…GRNYTFKKFR (91 aa). Residues 92 to 112 traverse the membrane as a helical segment; sequence GDLISGLTIASLCIPQDIGYA. Residues 113 to 116 lie on the Extracellular side of the membrane; the sequence is KLAN. The chain crosses the membrane as a helical span at residues 117–137; that stretch reads LDPKYGLYSSFVPPLVYACMG. Residues 138–141 are Cytoplasmic-facing; that stretch reads SSRD. The chain crosses the membrane as a helical span at residues 142–162; that stretch reads IAIGPVAVVSLLLGTLLRAEI. Topologically, residues 163-173 are extracellular; it reads DPNTSPDEYLR. Helical transmembrane passes span 174–194 and 195–215; these read LAFT…FFRL and GFLI…GAAI. At 216–253 the chain is on the extracellular side; sequence TIALQQLKGFLGIKKFTKKTDIISVLESVFKAAHHGWN. Residues 254–274 form a helical membrane-spanning segment; it reads WQTILIGASFLTFLLTSKIIG. Over 275–280 the chain is Cytoplasmic; it reads KKSKKL. Residues 281 to 301 traverse the membrane as a helical segment; the sequence is FWVPAIAPLISVIVSTFFVYI. Residues 302 to 339 are Extracellular-facing; it reads TRADKQGVQIVKHLDQGINPSSFHLIYFTGDNLAKGIR. A helical transmembrane segment spans residues 340-360; the sequence is IGVVAGMVALTEAVAIGRTFA. The Cytoplasmic portion of the chain corresponds to 361–372; that stretch reads AMKDYQIDGNKE. A helical transmembrane segment spans residues 373–393; it reads MVALGMMNVVGSMSSCYVATG. Residues 394-409 are Extracellular-facing; it reads SFSRSAVNFMAGCQTA. Residues 410 to 430 traverse the membrane as a helical segment; that stretch reads VSNIIMSIVVLLTLLFLTPLF. At 431 to 438 the chain is on the cytoplasmic side; sequence KYTPNAIL. A helical transmembrane segment spans residues 439–459; that stretch reads AAIIINAVIPLIDIQAAILIF. Topologically, residues 460-466 are extracellular; sequence KVDKLDF. Residues 467 to 487 traverse the membrane as a helical segment; sequence IACIGAFFGVIFVSVEIGLLI. The Cytoplasmic portion of the chain corresponds to 488-653; the sequence is AVSISFAKIL…ACCPKLSNEV (166 aa). Positions 522-645 constitute an STAS domain; that stretch reads QYPEATMVPG…LTVADAVEAC (124 aa).

It belongs to the SLC26A/SulP transporter (TC 2.A.53.1) family. In terms of assembly, homodimer. Interacts with OASA1 through its STAS domain. As to expression, expressed in lateral root cap, root hairs, epidermal and cortical cells of roots.

The protein resides in the cell membrane. With respect to regulation, interaction with OASA1 negatively impacts the transporter activity. Functionally, high-affinity H(+)/sulfate cotransporter that mediates the uptake of the environmental sulfate by plant roots. Plays a central role in the regulation of sulfate assimilation. Unable to transport molybdate. This is Sulfate transporter 1.2 (SULTR1;2) from Arabidopsis thaliana (Mouse-ear cress).